A 426-amino-acid polypeptide reads, in one-letter code: Glutamate-1-semialdehyde 2,1-aminomutase (426 aa).

An N6-(pyridoxal phosphate)lysine modification is found at K265.

It belongs to the class-III pyridoxal-phosphate-dependent aminotransferase family. HemL subfamily. Homodimer. The cofactor is pyridoxal 5'-phosphate.

The protein localises to the cytoplasm. It catalyses the reaction (S)-4-amino-5-oxopentanoate = 5-aminolevulinate. Its pathway is porphyrin-containing compound metabolism; protoporphyrin-IX biosynthesis; 5-aminolevulinate from L-glutamyl-tRNA(Glu): step 2/2. The protein is Glutamate-1-semialdehyde 2,1-aminomutase of Alcanivorax borkumensis (strain ATCC 700651 / DSM 11573 / NCIMB 13689 / SK2).